The following is a 566-amino-acid chain: Putative sulfite reductase [NADPH] hemoprotein beta-component (566 aa).

[4Fe-4S] cluster is bound by residues Cys430, Cys436, Cys475, and Cys479. Cys479 is a siroheme binding site.

The protein belongs to the nitrite and sulfite reductase 4Fe-4S domain family. Alpha(8)-beta(8). The alpha component is a flavoprotein, the beta component is a hemoprotein. Siroheme is required as a cofactor. The cofactor is [4Fe-4S] cluster.

The enzyme catalyses hydrogen sulfide + 3 NADP(+) + 3 H2O = sulfite + 3 NADPH + 4 H(+). Its pathway is sulfur metabolism; hydrogen sulfide biosynthesis; hydrogen sulfide from sulfite (NADPH route): step 1/1. Its function is as follows. Component of the sulfite reductase complex that catalyzes the 6-electron reduction of sulfite to sulfide. This is one of several activities required for the biosynthesis of L-cysteine from sulfate. The protein is Putative sulfite reductase [NADPH] hemoprotein beta-component of Buchnera aphidicola subsp. Schizaphis graminum (strain Sg).